The primary structure comprises 231 residues: Allergen Ani s 10 (231 aa).

The signal sequence occupies residues 1–19 (MHLITALVLLLQLIHFITS). Tandem repeats lie at residues 28 to 56 (GGPGPVVGGSGIGNVWEKANEQAAEQQNI), 57 to 85 (GGPGPVISGSGIGDVWNKANEPAEQQENI), 86 to 114 (GGPGPVVSGSGIGNVWEKANEQAAHQQSI), 115 to 143 (EGPGPVVSGSGIGNVWEKANEQAAHQQSI), 144 to 172 (EGPGPVVSGSGIGDVWNKANEQAAEQQNI), 173 to 201 (GGPGPVISGSGIGNVWEKANEQAAEQQNI), and 204 to 231 (GGPGPVKSGSGIGNVWEETNEEAASMQA). Residues 28–201 (GGPGPVVGGS…NEQAAEQQNI (174 aa)) are 6 X 29 AA tandem repeats of [EG]-G-P-G-P-V-[IV]-[SG]-G-S-G-I-G-[ND]-V-W-[NE]-K-A-N-E-[QP]-A-[AE]-[QEH]-Q-[EQ]-[NS]-I. Disordered stretches follow at residues 107–126 (QAAHQQSIEGPGPVVSGSGI) and 134–231 (NEQA…SMQA). Low complexity-rich tracts occupy residues 114-123 (IEGPGPVVSG), 143-152 (IEGPGPVVSG), and 177-187 (PVISGSGIGNV).

This chain is Allergen Ani s 10, found in Anisakis simplex (Herring worm).